The primary structure comprises 861 residues: Leucine--tRNA ligase (861 aa).

The 'HIGH' region motif lies at 42–52 (PYPSGKLHMGH). The short motif at 620-624 (KMSKS) is the 'KMSKS' region element. K623 provides a ligand contact to ATP.

It belongs to the class-I aminoacyl-tRNA synthetase family.

It is found in the cytoplasm. It catalyses the reaction tRNA(Leu) + L-leucine + ATP = L-leucyl-tRNA(Leu) + AMP + diphosphate. In Buchnera aphidicola subsp. Schizaphis graminum (strain Sg), this protein is Leucine--tRNA ligase.